A 371-amino-acid chain; its full sequence is Cytochrome b (371 aa).

A run of 4 helical transmembrane segments spans residues 25–45, 69–90, 105–125, and 170–190; these read FGSMLLTCTALQISTGFFLAV, WIMQNLHAIGASLFFLCIYIHI, WLSGTTLLIILMATAFFGYVL, and FFALHFILPFLITSLSSIHII. Positions 75 and 89 each coordinate heme b. Heme b is bound by residues H174 and H188. H193 contributes to the a ubiquinone binding site. Transmembrane regions (helical) follow at residues 218 to 238, 280 to 300, 312 to 332, and 339 to 358; these read YKDMFMISSMITLLFIVLSFM, LGGTLALLMSVIILTTTPFTH, LTQALFWTLIATFITITWTAT, and FTLISQVASVTYFSFFIINP.

It belongs to the cytochrome b family. As to quaternary structure, the cytochrome bc1 complex contains 3 respiratory subunits (MT-CYB, CYC1 and UQCRFS1), 2 core proteins (UQCRC1 and UQCRC2) and probably 6 low-molecular weight proteins. Requires heme b as cofactor.

The protein resides in the mitochondrion inner membrane. Functionally, component of the ubiquinol-cytochrome c reductase complex (complex III or cytochrome b-c1 complex) that is part of the mitochondrial respiratory chain. The b-c1 complex mediates electron transfer from ubiquinol to cytochrome c. Contributes to the generation of a proton gradient across the mitochondrial membrane that is then used for ATP synthesis. The polypeptide is Cytochrome b (MT-CYB) (Toxicocalamus preussi (Preuss's forest snake)).